Reading from the N-terminus, the 281-residue chain is Beta-lactamase (281 aa).

An N-terminal signal peptide occupies residues 1–24 (MKKLIFLIVIALVLSACNSNSSHA). S63 functions as the Acyl-ester intermediate in the catalytic mechanism. Residue 225–227 (KSG) participates in substrate binding.

Belongs to the class-A beta-lactamase family.

It catalyses the reaction a beta-lactam + H2O = a substituted beta-amino acid. The chain is Beta-lactamase (blaZ) from Staphylococcus aureus.